The following is a 428-amino-acid chain: Enolase (428 aa).

Gln163 is a binding site for (2R)-2-phosphoglycerate. Catalysis depends on Glu205, which acts as the Proton donor. Mg(2+) contacts are provided by Asp242, Glu286, and Asp313. Positions 338, 367, 368, and 389 each coordinate (2R)-2-phosphoglycerate. Lys338 functions as the Proton acceptor in the catalytic mechanism.

This sequence belongs to the enolase family. Requires Mg(2+) as cofactor.

It localises to the cytoplasm. It is found in the secreted. The protein localises to the cell surface. The enzyme catalyses (2R)-2-phosphoglycerate = phosphoenolpyruvate + H2O. It participates in carbohydrate degradation; glycolysis; pyruvate from D-glyceraldehyde 3-phosphate: step 4/5. Catalyzes the reversible conversion of 2-phosphoglycerate (2-PG) into phosphoenolpyruvate (PEP). It is essential for the degradation of carbohydrates via glycolysis. The chain is Enolase from Acidovorax sp. (strain JS42).